A 599-amino-acid chain; its full sequence is PR domain zinc finger protein 5 (599 aa).

Positions 8-124 (DRFALKSSRV…TDTELLIGYL (117 aa)) constitute an SET domain. 12 consecutive C2H2-type zinc fingers follow at residues 167–190 (FACP…QSLH), 199–221 (FKCE…FEQH), 231–256 (FVCK…ENVH), 264–286 (LICS…RKIH), 289–311 (FDCQ…MITH), 317–339 (YNCE…KVIH), 345–367 (YQCK…KKTH), 373–395 (FQCD…LLIH), 401–424 (FKCH…QVVH), 430–452 (YRCE…KKTH), 458–480 (KVCP…IRSH), and 486–508 (YQCP…IRTH). A C2H2-type 13; degenerate zinc finger spans residues 514–536 (YQCSECSKAFSQKRGLDEHKRTH). 2 consecutive C2H2-type zinc fingers follow at residues 542 to 564 (FQCD…KMTH) and 571 to 594 (AECH…DNIH).

The protein belongs to the class V-like SAM-binding methyltransferase superfamily. Interacts with EHMT2/G9A, GFI1 and HDAC1.

The protein localises to the nucleus. Sequence-specific DNA-binding transcription factor. Represses transcription at least in part by recruitment of the histone methyltransferase EHMT2/G9A and histone deacetylases such as HDAC1. Regulates hematopoiesis-associated protein-coding and microRNA (miRNA) genes. May regulate the expression of proteins involved in extracellular matrix development and maintenance, connective tissue components and molecules regulating cell migration and adhesion. May cause G2/M arrest and apoptosis in cancer cells. The protein is PR domain zinc finger protein 5 (Prdm5) of Mus musculus (Mouse).